Consider the following 60-residue polypeptide: Large ribosomal subunit protein bL32 (60 aa).

This sequence belongs to the bacterial ribosomal protein bL32 family.

The sequence is that of Large ribosomal subunit protein bL32 from Streptococcus pneumoniae serotype 19F (strain G54).